Here is a 128-residue protein sequence, read N- to C-terminus: Small nuclear ribonucleoprotein SmD3a (128 aa).

The region spanning 7-79 (IPVKLLHESS…VRFLVIPDML (73 aa)) is the Sm domain. The segment at 90 to 128 (GKGKSASLGVGRGRGAAMRAKGTGRGTGGGRGAVPPVRR) is disordered. Positions 112 to 121 (TGRGTGGGRG) are enriched in gly residues.

It belongs to the snRNP core protein family. In terms of tissue distribution, expressed in young seedlings, roots, leaves, flowers and immature siliques.

The protein localises to the cytoplasm. Its subcellular location is the cytosol. The protein resides in the nucleus. Core component of the spliceosomal U1, U2, U4 and U5 small nuclear ribonucleoproteins (snRNPs), the building blocks of the spliceosome. May play a minor role in the splicing of cellular pre-mRNAs. This Arabidopsis thaliana (Mouse-ear cress) protein is Small nuclear ribonucleoprotein SmD3a.